The following is a 223-amino-acid chain: Pre-hexon-linking protein VIII (223 aa).

Thr64 bears the Phosphothreonine; by host mark. The propeptide occupies 112–153; sequence GALAPRDLYALTLRGRGIQLNEDLPLSASTLRPDGIFQLGGG. Residue Ser170 is modified to Phosphoserine; by host.

Belongs to the adenoviridae hexon-linking protein family. In terms of assembly, interacts with the peripentonal hexons as well as the hexons in the facets. Part of a complex composed of the core-capsid bridging protein, the endosome lysis protein VI and the hexon-linking protein VIII; these interactions bridge the virus core to the capsid. Post-translationally, cleaved by the viral protease during virion maturation. May cause the middle segment to be shed from the capsid.

Its subcellular location is the virion. The protein localises to the host nucleus. Its function is as follows. Structural component of the virion that acts as a cement protein on the capsid interior and which glue the peripentonal hexons and group-of-nine hexons together. The sequence is that of Pre-hexon-linking protein VIII from Porcine adenovirus A serotype 3 (PAdV-3).